The primary structure comprises 683 residues: DNA-directed RNA polymerase subunit beta' (683 aa).

Zn(2+) contacts are provided by Cys69, Cys71, Cys87, and Cys90. Mg(2+) contacts are provided by Asp492, Asp494, and Asp496.

It belongs to the RNA polymerase beta' chain family. RpoC1 subfamily. In plastids the minimal PEP RNA polymerase catalytic core is composed of four subunits: alpha, beta, beta', and beta''. When a (nuclear-encoded) sigma factor is associated with the core the holoenzyme is formed, which can initiate transcription. Mg(2+) serves as cofactor. Zn(2+) is required as a cofactor.

It localises to the plastid. Its subcellular location is the chloroplast. The catalysed reaction is RNA(n) + a ribonucleoside 5'-triphosphate = RNA(n+1) + diphosphate. DNA-dependent RNA polymerase catalyzes the transcription of DNA into RNA using the four ribonucleoside triphosphates as substrates. The chain is DNA-directed RNA polymerase subunit beta' from Coffea arabica (Arabian coffee).